A 230-amino-acid chain; its full sequence is Probable nicotinate-nucleotide adenylyltransferase (230 aa).

Belongs to the NadD family.

The catalysed reaction is nicotinate beta-D-ribonucleotide + ATP + H(+) = deamido-NAD(+) + diphosphate. It participates in cofactor biosynthesis; NAD(+) biosynthesis; deamido-NAD(+) from nicotinate D-ribonucleotide: step 1/1. Functionally, catalyzes the reversible adenylation of nicotinate mononucleotide (NaMN) to nicotinic acid adenine dinucleotide (NaAD). The protein is Probable nicotinate-nucleotide adenylyltransferase of Pseudomonas putida (strain ATCC 47054 / DSM 6125 / CFBP 8728 / NCIMB 11950 / KT2440).